The sequence spans 330 residues: UDP-glucose 4-epimerase (330 aa).

NAD(+) is bound by residues 11 to 12 (YI), 31 to 36 (DALYTG), 51 to 52 (DI), 73 to 77 (FAAYS), Asn-92, Ser-117, Tyr-141, Lys-145, and Phe-169. Residues Ser-117 and Tyr-141 each coordinate substrate. Tyr-141 serves as the catalytic Proton acceptor. Substrate-binding positions include Asn-170, 189–190 (HL), 206–208 (TIF), Arg-221, and 282–285 (RGGD).

This sequence belongs to the NAD(P)-dependent epimerase/dehydratase family. As to quaternary structure, homodimer. The cofactor is NAD(+).

It carries out the reaction UDP-alpha-D-glucose = UDP-alpha-D-galactose. Its pathway is carbohydrate metabolism; galactose metabolism. Involved in the metabolism of galactose. Catalyzes the conversion of UDP-galactose (UDP-Gal) to UDP-glucose (UDP-Glc) through a mechanism involving the transient reduction of NAD. It also could be involved in preparation of carbohydrate residues for incorporation into complex polymers, such as exopolysaccharides. This chain is UDP-glucose 4-epimerase (galE), found in Lactobacillus helveticus (Lactobacillus suntoryeus).